Reading from the N-terminus, the 269-residue chain is Zinc transporter ZupT (269 aa).

Transmembrane regions (helical) follow at residues 12–32 (AFSI…LVMF), 41–61 (LSFG…TEIF), 75–95 (DHAF…IALI), 126–146 (MMAA…TFFA), 152–172 (AVGM…GISI), 187–207 (VWAC…GYLV), 211–231 (FLSP…MVFL), and 249–269 (TVYG…LFHF). Fe(2+)-binding residues include Asn-136 and Glu-139. Zn(2+) is bound by residues Glu-139 and His-164. Fe(2+)-binding residues include Asn-165, Glu-168, and Glu-197. Glu-168 is a Zn(2+) binding site.

The protein belongs to the ZIP transporter (TC 2.A.5) family. ZupT subfamily.

It localises to the cell inner membrane. The catalysed reaction is Zn(2+)(in) = Zn(2+)(out). In terms of biological role, mediates zinc uptake. May also transport other divalent cations. The protein is Zinc transporter ZupT of Neisseria meningitidis serogroup A / serotype 4A (strain DSM 15465 / Z2491).